The following is a 376-amino-acid chain: DNA replication and repair protein RecF (376 aa).

Residue 30–37 (GNNAQGKS) participates in ATP binding.

The protein belongs to the RecF family.

It is found in the cytoplasm. The RecF protein is involved in DNA metabolism; it is required for DNA replication and normal SOS inducibility. RecF binds preferentially to single-stranded, linear DNA. It also seems to bind ATP. The chain is DNA replication and repair protein RecF from Trichormus variabilis (strain ATCC 29413 / PCC 7937) (Anabaena variabilis).